A 448-amino-acid chain; its full sequence is Beclin-1 (448 aa).

Met1 carries the post-translational modification N-acetylmethionine. Phosphoserine occurs at positions 14 and 29. A disordered region spans residues 47–66; that stretch reads TTAQAKPGETQEEEANSGEE. Residues Ser88, Ser91, and Ser94 each carry the phosphoserine; by AMPK modification. Positions 106–125 match the BH3 motif; that stretch reads TMENLSRRLKVTGDLFDIMS. The interaction with BCL2 and BCL2L1 isoform Bcl-X(L) stretch occupies residues 110 to 157; that stretch reads LSRRLKVTGDLFDIMSGQTDVDHPLCEECTDTLLDQLDTQLNVTENEC. Phosphothreonine; by DAPK1 is present on Thr117. Residues 140-268 adopt a coiled-coil conformation; it reads DTLLDQLDTQ…LDKLKKTNVF (129 aa). Residues 243 to 448 are evolutionary conserved domain (ECD); it reads DELKSVENQV…AWVSSQFYNK (206 aa). Glycyl lysine isopeptide (Lys-Gly) (interchain with G-Cter in ubiquitin) cross-links involve residues Lys400 and Lys435. Positions 423–448 are required for membrane-association; sequence WTKALKFMLTNLKWGLAWVSSQFYNK.

The protein belongs to the beclin family. In terms of assembly, a homodimeric form is proposed to exist; this metastable form readily transits to ATG14- or UVRAG-containing complexes with BECN1:UVRAG being more stable than BECN1:ATG14. Component of the PI3K (PI3KC3/PI3K-III/class III phosphatidylinositol 3-kinase) complex whose core is composed of the catalytic subunit PIK3C3, the regulatory subunit PIK3R4 and BECN1, and associates with additional regulatory/auxiliary subunits to form alternative complex forms. Accepted alternative complex forms containing a fourth regulatory subunit in a mutually exclusive manner are PI3K complex I (PI3KC3-C1) containing ATG14, and PI3K complex II (PI3KC3-C2) containing UVRAG. PI3KC3-C1 displays a V-shaped architecture with PIK3R4 serving as a bridge between PIK3C3 and the ATG14:BECN1 subcomplex. Both, PI3KC3-C1 and PI3KC3-C2, can associate with further regulatory subunits, such as RUBCN, SH3GLB1/Bif-1 and AMBRA1. PI3KC3-C1 probably associates with PIK3CB. Forms a complex with PPP2CA and AMBRA1; AMBRA1 and BECN1 components of the complex regulate MYC stability via different pathways. Component of the complex, at least composed of LRPPRC, BECN1 and BCL2; the interactions prevent BECN1 from forming an autophagy-inducing complex with PIK3C3. Interacts with AMBRA1, GOPC, GRID2 and PIK3CB. Interacts with BCL2 and BCL2L1 isoform Bcl-X(L); the interaction inhibits BECN1 function in promoting autophagy by interfering with the formation of the PI3K complex. Interacts with cytosolic HMGB1; inhibits the interaction of BECN1 and BCL2 leading to promotion of autophagy. Interacts with USP10, USP13, VMP1, DAPK1. Interacts with the poly-Gln domain of ATXN3; the interaction causes deubiquitination at Lys-400 and stabilizes BECN1. Interacts with SLAMF1. Interacts with TRIM5; the interaction causes activation of BECN1 by causing its dissociation from its inhibitors BCL2 and TAB2. Interacts with active ULK1 (phosphorylated on 'Ser-317') and MEFV simultaneously. Interacts with TRIM50. Interacts with TRIM16. Interacts with WDR81 and WDR91; negatively regulates the PI3 kinase/PI3K activity associated with endosomal membranes. Interacts with LAPTM4B; competes with EGFR for LAPTM4B binding; regulates EGFR activity. Interacts with ATG14; this interaction is increased in the absence of TMEM39A. Interacts with WASHC1; preventing interaction with AMBRA1 and the DCX(AMBRA1) complex and subsequent ubiquitination. Interacts with TRIM17. Interacts with BCL2L10/BCL-B (via BH1 domain). Interacts with SH3BGRL. Interacts with Irgm1; enhancing BECN1-interacting partners and influencing the composition of the BECN1 complex. Interacts with ARMC3. Interacts with LRPPRC. As to quaternary structure, (Microbial infection) Interacts with murine gammaherpesvirus 68 M11; the viral protein binds BECN1 with higher affinity than cellular BCL2. Post-translationally, phosphorylation at Thr-117 by DAPK1 reduces its interaction with BCL2 and BCL2L1 and promotes induction of autophagy. In response to autophagic stimuli, phosphorylated at serine residues by AMPK in an ATG14-dependent manner, and this phosphorylation is critical for maximally efficient autophagy. Polyubiquitinated by NEDD4, both with 'Lys-11'- and 'Lys-63'-linkages. 'Lys-11'-linked polyubiquitination leads to degradation and is enhanced when the stabilizing interaction partner VPS34 is depleted. Deubiquitinated by USP10 and USP13, leading to stabilize the PIK3C3/VPS34-containing complexes. Polyubiquitinated at Lys-400 with 'Lys-48'-linkages. 'Lys-48'-linked poyubiquitination of Lys-400 leads to degradation. Deubiquitinated by ATXN3, leading to stabilization. Ubiquitinated at Lys-435 via 'Lys-63'-linkage by the DCX(AMBRA1) complex, thereby increasing the association between BECN1 and PIK3C3 to promote PIK3C3 activity. 'Lys-48'-linked ubiquitination by RNF216 leads to proteasomal degradation and autophagy inhibition. In terms of processing, proteolytically processed by caspases including CASP8 and CASP3; the C-terminal fragments lack autophagy-inducing capacity and are proposed to induce apoptosis. Thus the cleavage is proposed to be an determinant to switch from autophagy to apoptosis pathways affecting cellular homeostasis including viral infections and survival of tumor cells.

The protein localises to the cytoplasm. It is found in the golgi apparatus. It localises to the trans-Golgi network membrane. Its subcellular location is the endosome membrane. The protein resides in the endoplasmic reticulum membrane. The protein localises to the mitochondrion membrane. It is found in the endosome. It localises to the cytoplasmic vesicle. Its subcellular location is the autophagosome. The protein resides in the mitochondrion. The protein localises to the nucleus. Plays a central role in autophagy. Acts as a core subunit of different PI3K complex forms that mediate formation of phosphatidylinositol 3-phosphate and are believed to play a role in multiple membrane trafficking pathways: PI3KC3-C1 is involved in initiation of autophagosomes and PI3KC3-C2 in maturation of autophagosomes and endocytosis. Involved in regulation of degradative endocytic trafficking and required for the abscission step in cytokinesis, probably in the context of PI3KC3-C2. Essential for the formation of PI3KC3-C2 but not PI3KC3-C1 PI3K complex forms. Involved in endocytosis including endosome formation in neuronal cells. May play a role in antiviral host defense. In terms of biological role, beclin-1-C 35 kDa localized to mitochondria can promote apoptosis; it induces the mitochondrial translocation of BAX and the release of proapoptotic factors. This chain is Beclin-1 (Becn1), found in Mus musculus (Mouse).